The following is a 579-amino-acid chain: MPSASCDTLLDDIEDIVSQEDSKPQDRHFVRKDVVPKVRRRNTQKYLQEEENSPPSDSTIPGIQKIWIRTWGCSHNNSDGEYMAGQLAAYGYKITENASDADLWLLNSCTVKNPAEDHFRNSIKKAQEENKKIVLAGCVPQAQPRQDYLKGLSIIGVQQIDRVVEVVEETIKGHSVRLLGQKKDNGRRLGGARLDLPKIRKNPLIEIISINTGCLNACTYCKTKHARGNLASYPIDELVDRAKQSFQEGVCEIWLTSEDTGAYGRDIGTNLPTLLWKLVEVIPEGAMLRLGMTNPPYILEHLEEMAKILNHPRVYAFLHIPVQSASDSVLMEMKREYCVADFKRVVDFLKEKVPGITIATDIICGFPGETDQDFQETVKLVEEYKFPSLFINQFYPRPGTPAAKMEQVPAQVKKQRTKDLSRVFHSYSPYDHKIGERQQVLVTEESFDSKFYVAHNQFYEQVLVPKNPAFMGKMVEVDIYESGKHFMKGQPVSDAKVYTPSISKPLAKGEVSGLTKDFRNGLGNQLSSGSHTSAASQCDSASSRMVLPMPRLHQDCALRMSVGLALLGLLFAFFVKVYN.

At S53 the chain carries Phosphoserine. An MTTase N-terminal domain is found at 64 to 172; it reads QKIWIRTWGC…VVEVVEETIK (109 aa). Residues C73 and C109 each coordinate [4Fe-4S] cluster. Position 122 is a phosphoserine (S122). [4Fe-4S] cluster-binding residues include C138, C214, C218, and C221. The 232-residue stretch at 200–431 folds into the Radical SAM core domain; sequence RKNPLIEIIS…RVFHSYSPYD (232 aa). Residues 431–493 enclose the TRAM domain; that stretch reads DHKIGERQQV…KHFMKGQPVS (63 aa). T499 is subject to Phosphothreonine. The chain crosses the membrane as a helical span at residues 556–578; the sequence is CALRMSVGLALLGLLFAFFVKVY.

It belongs to the methylthiotransferase family. CDKAL1 subfamily. It depends on [4Fe-4S] cluster as a cofactor. In terms of tissue distribution, expressed in pancreatic islets.

It is found in the endoplasmic reticulum membrane. It carries out the reaction N(6)-L-threonylcarbamoyladenosine(37) in tRNA + (sulfur carrier)-SH + AH2 + 2 S-adenosyl-L-methionine = 2-methylsulfanyl-N(6)-L-threonylcarbamoyladenosine(37) in tRNA + (sulfur carrier)-H + 5'-deoxyadenosine + L-methionine + A + S-adenosyl-L-homocysteine + 2 H(+). In terms of biological role, catalyzes the methylthiolation of N6-threonylcarbamoyladenosine (t(6)A), leading to the formation of 2-methylthio-N6-threonylcarbamoyladenosine (ms(2)t(6)A) at position 37 in tRNAs that read codons beginning with adenine. The polypeptide is Threonylcarbamoyladenosine tRNA methylthiotransferase (CDKAL1) (Homo sapiens (Human)).